A 222-amino-acid polypeptide reads, in one-letter code: Eukaryotic translation initiation factor 3 subunit K (222 aa).

Positions 46-208 (YDLEANLAVL…KIKTKNITEK (163 aa)) constitute a PCI domain.

Belongs to the eIF-3 subunit K family. In terms of assembly, component of the eukaryotic translation initiation factor 3 (eIF-3) complex. The eIF-3 complex interacts with pix.

The protein localises to the cytoplasm. Functionally, component of the eukaryotic translation initiation factor 3 (eIF-3) complex, which is involved in protein synthesis of a specialized repertoire of mRNAs and, together with other initiation factors, stimulates binding of mRNA and methionyl-tRNAi to the 40S ribosome. The eIF-3 complex specifically targets and initiates translation of a subset of mRNAs involved in cell proliferation. In Drosophila mojavensis (Fruit fly), this protein is Eukaryotic translation initiation factor 3 subunit K.